The chain runs to 441 residues: Enolase (441 aa).

Gln163 is a binding site for (2R)-2-phosphoglycerate. The active-site Proton donor is Glu205. Asp242, Glu288, and Asp315 together coordinate Mg(2+). Lys340, Arg369, Ser370, and Lys391 together coordinate (2R)-2-phosphoglycerate. The Proton acceptor role is filled by Lys340.

This sequence belongs to the enolase family. Requires Mg(2+) as cofactor.

Its subcellular location is the cytoplasm. The protein localises to the secreted. It is found in the cell surface. The enzyme catalyses (2R)-2-phosphoglycerate = phosphoenolpyruvate + H2O. It participates in carbohydrate degradation; glycolysis; pyruvate from D-glyceraldehyde 3-phosphate: step 4/5. In terms of biological role, catalyzes the reversible conversion of 2-phosphoglycerate (2-PG) into phosphoenolpyruvate (PEP). It is essential for the degradation of carbohydrates via glycolysis. This Ligilactobacillus salivarius (strain UCC118) (Lactobacillus salivarius) protein is Enolase.